Here is a 1914-residue protein sequence, read N- to C-terminus: MSRWLWPWSNCVKERVCRYLLQHYLGHFFQEHLSLDQLSLDLYKGSVALRDIHLETWSVNEFLRSMESPLELVEGFVSSIEVAVPWAALLTDHCTVCVSGLQLTLQPRQGSGPGAADSQSWASCMTTSLQLAQECLREGLPEPSEPPQPLEGLEMFAQTIETVLRRIKVTFLNTVVRVEHSLGDEDRSVAVEVRVQRLEYCDEAVRDPSQAPPVDVHQPPAFLHKLLQLSGVCLYFEELPSQADPPQPPLQIGSCTGYVELMVRLKQNEAFPGPKLEVSGQLGSLHLLLTPRQLQQLQRLLSAVNLADPAGLADKLNKSRPLGAEDLWLIEQDLNQQLQAGAVAESLSLYPITNPLNLDSTDLFFSMAGLTSSVTSAVSELSVYSVDLGSSVHSNMAFHRPSTPPHSGGKMAPTPLLDTTRPDSLVKMTLGGVSLTLLQTASPSSGPSDLPTHFFAEFDAAKDGPFGSRDFSHLRPRFQRACPCSHVRLTGTAVQLSWELRTGSHSRRTSSTEVHFGQLEVLECLWPRAATEPEYTEILSFPSHSGSEASARPCAHLRHTQTIRRVLKSRSRRSTACHCHSELSLDLADFQSDVELGSLDRLAALFRQVTTPSEPPAGLLTEPPQATELQTVFRLSAPRATLRLRFPIPDLRPDRDPWAGQAVRAEQLRLELSEPQFRSELNSGPGPPAPTRLELTCSDLQGIYEDGEKPPVPCLRVSKALNPRSTEAKYFLPQVVVTLNPQSSGTQWETAYEKGRDLELSTESPCELQQPEPSPFSSKRTMYETEEMVIPGDPEEMRTFQSRTLALSRCTLDVIMPSAHIFLPSKEVYESIYNRINNDLLMWEPADLLPTSSAAARPPGSSGFKMCKSAFKLDSDSDEEDAQFFSMASGVPQTPAPEPSRRQSQSTFSTLVTVLKGRITALCEAKDETGKRLDVTHGELVLDVEQGTIFSVAQYRGQPGLGYFCLEAEKAKLYHRAAIEDYLLPTHLEVPSFAPPAQLAPTIYPSEEGVTERGTLGRKGQGPPMLSAAVRIHLDPHKNVKEFLVTVRLHKATLRHYMAPPEQSWHSQLLDFLDVLDDPVLGYLPPTVITVLHTHLFSCAVDYRPLYLPVRVLVTAETFTLSSNIVMDTSTFLLRFILDDSALYLSDKCEVESLDLRRDYVCVLDIDLLELVIKTWKGSTEGRLSQPLFELRCSNNVVHVHSCADSCALLVNLLQYLTSSGDLHPPPRPPSPTEIAGQKLSESPASLPSCLPVETALINQRDLTDALLDTERRGLQELAQSSGGPLPQASPVSVYLFPGERSGAQAPLPPPGASSHTLGSKAKEHENEEEGDGDTLDSDEFCILDAPGLGIAPRDGEPIVTQLHPGPIIVHDGHFSQPLGSTDLLRAPAHFPVPSSRVVLREVSFIWHLYGGRDFGLHPTYRARVGLTGPRVSPSRSSGPNRPQNSWRTQGGIGRQHQVLMEIQLSKVSFQHEVYPEESAIAGGLGQELDERPLSRQVLIVQELEIRDRLATSKINKFLHLHTSERLPRRTHSNMLTIKALHVAPTSSVGGPECCLRVSMMPLRLNVDQDALFFLKDFFTSLAASINPMVPGDTSEAPRETHSRPGSPQEGQSEDTETASNPPEAPGSSHSSSDQQPIYFREFRFTSEVPICLDYHGKHVTVDQVGTFMGLLIGLAQLNCSELKLKRLCCRHGLLGVDKVLCYALNEWLQDIRKNQLPGLLGGVGPMHSVVQLFQGFRDLLWLPIEQYRKDGRLIRGLQRGAASFGSSTASAALELSNRLVQAIQATAETVYDILSPASPVSRSLQDKRSSRKLRRGQQPADLREGMAKAYDAVREGILDTAQTICDVASRGHEQKGLTGAVGGVIRQLPPTVVKPIIVATEATSNVLGGMRNQILPDAHKDHALKWRLEEAQD.

Positions 14-112 constitute a Chorein N-terminal domain; the sequence is ERVCRYLLQH…LTLQPRQGSG (99 aa). A phosphoserine mark is found at Ser764, Ser869, Ser875, and Ser877. The segment at 1222–1243 is disordered; it reads DLHPPPRPPSPTEIAGQKLSES. Phosphoserine occurs at positions 1246, 1282, and 1290. The segment at 1299-1337 is disordered; it reads GERSGAQAPLPPPGASSHTLGSKAKEHENEEEGDGDTLD. Positions 1327 to 1337 are enriched in acidic residues; sequence NEEEGDGDTLD. Residues 1337–1383 form a WIPI-interacting region; that stretch reads DSDEFCILDAPGLGIAPRDGEPIVTQLHPGPIIVHDGHFSQPLGSTD. The residue at position 1381 (Ser1381) is a Phosphoserine. Disordered stretches follow at residues 1427 to 1452, 1589 to 1634, and 1803 to 1822; these read LTGP…TQGG, MVPG…SSSD, and RSLQ…QPAD. The segment covering 1429-1446 has biased composition (low complexity); it reads GPRVSPSRSSGPNRPQNS.

It belongs to the ATG2 family. As to quaternary structure, interacts with ATG9A (via C-terminus). Interacts with TMEM41B. Interacts with VMP1.

The protein resides in the preautophagosomal structure membrane. The protein localises to the lipid droplet. Its subcellular location is the endoplasmic reticulum membrane. The enzyme catalyses a 1,2-diacyl-sn-glycero-3-phospho-L-serine(in) = a 1,2-diacyl-sn-glycero-3-phospho-L-serine(out). It carries out the reaction a 1,2-diacyl-sn-glycero-3-phosphoethanolamine(in) = a 1,2-diacyl-sn-glycero-3-phosphoethanolamine(out). Its function is as follows. Lipid transfer protein involved in autophagosome assembly. Tethers the edge of the isolation membrane (IM) to the endoplasmic reticulum (ER) and mediates direct lipid transfer from ER to IM for IM expansion. Binds to the ER exit site (ERES), which is the membrane source for autophagosome formation, and extracts phospholipids from the membrane source and transfers them to ATG9 (ATG9A or ATG9B) to the IM for membrane expansion. Lipid transfer activity is enhanced by WIPI1 and WDR45/WIPI4, which promote ATG2A-association with phosphatidylinositol 3-monophosphate (PI3P)-containing membranes. Also regulates lipid droplets morphology and distribution within the cell. Functionally, (Microbial infection) Mediates the intracellular lifestyle of Cryptococcus neoformans by supporting infection. This Mus musculus (Mouse) protein is Autophagy-related protein 2 homolog A.